Consider the following 682-residue polypeptide: tRNA(Met) cytidine acetyltransferase TmcA (682 aa).

Residues Q176, 198–207, and R320 each bind ATP; that span reads GRGKSTLAGM. In terms of domain architecture, N-acetyltransferase spans 357–534; it reads QQQWIQQPEL…SGCYTAMAIF (178 aa). Acetyl-CoA is bound by residues 462–464 and E502; that span reads VAV.

The protein belongs to the RNA cytidine acetyltransferase family. TmcA subfamily.

The protein localises to the cytoplasm. It catalyses the reaction cytidine(34) in elongator tRNA(Met) + acetyl-CoA + ATP + H2O = N(4)-acetylcytidine(34) in elongator tRNA(Met) + ADP + phosphate + CoA + H(+). In terms of biological role, catalyzes the formation of N(4)-acetylcytidine (ac(4)C) at the wobble position of tRNA(Met), by using acetyl-CoA as an acetyl donor and ATP (or GTP). This Photorhabdus asymbiotica subsp. asymbiotica (strain ATCC 43949 / 3105-77) (Xenorhabdus luminescens (strain 2)) protein is tRNA(Met) cytidine acetyltransferase TmcA.